Consider the following 240-residue polypeptide: Small ribosomal subunit protein uS2 (240 aa).

Belongs to the universal ribosomal protein uS2 family.

This chain is Small ribosomal subunit protein uS2, found in Haemophilus influenzae (strain 86-028NP).